Consider the following 61-residue polypeptide: Photosystem II reaction center protein K (61 aa).

The propeptide occupies 1 to 24 (MLNTFSLIGICLNSTLYSSSFFFG). Residues 36–56 (IVDIMPVIPLFFFLLAFVWQA) traverse the membrane as a helical segment.

This sequence belongs to the PsbK family. In terms of assembly, PSII is composed of 1 copy each of membrane proteins PsbA, PsbB, PsbC, PsbD, PsbE, PsbF, PsbH, PsbI, PsbJ, PsbK, PsbL, PsbM, PsbT, PsbX, PsbY, PsbZ, Psb30/Ycf12, at least 3 peripheral proteins of the oxygen-evolving complex and a large number of cofactors. It forms dimeric complexes.

It is found in the plastid. It localises to the chloroplast thylakoid membrane. One of the components of the core complex of photosystem II (PSII). PSII is a light-driven water:plastoquinone oxidoreductase that uses light energy to abstract electrons from H(2)O, generating O(2) and a proton gradient subsequently used for ATP formation. It consists of a core antenna complex that captures photons, and an electron transfer chain that converts photonic excitation into a charge separation. This Solanum bulbocastanum (Wild potato) protein is Photosystem II reaction center protein K.